The primary structure comprises 231 residues: 5'-methylthioadenosine/S-adenosylhomocysteine nucleosidase (231 aa).

E12 serves as the catalytic Proton acceptor. Substrate contacts are provided by residues G78, M153, and 174-175 (ME). D198 (proton donor) is an active-site residue.

Belongs to the PNP/UDP phosphorylase family. MtnN subfamily.

It carries out the reaction S-adenosyl-L-homocysteine + H2O = S-(5-deoxy-D-ribos-5-yl)-L-homocysteine + adenine. The enzyme catalyses S-methyl-5'-thioadenosine + H2O = 5-(methylsulfanyl)-D-ribose + adenine. It catalyses the reaction 5'-deoxyadenosine + H2O = 5-deoxy-D-ribose + adenine. Its pathway is amino-acid biosynthesis; L-methionine biosynthesis via salvage pathway; S-methyl-5-thio-alpha-D-ribose 1-phosphate from S-methyl-5'-thioadenosine (hydrolase route): step 1/2. In terms of biological role, catalyzes the irreversible cleavage of the glycosidic bond in both 5'-methylthioadenosine (MTA) and S-adenosylhomocysteine (SAH/AdoHcy) to adenine and the corresponding thioribose, 5'-methylthioribose and S-ribosylhomocysteine, respectively. Also cleaves 5'-deoxyadenosine, a toxic by-product of radical S-adenosylmethionine (SAM) enzymes, into 5-deoxyribose and adenine. This chain is 5'-methylthioadenosine/S-adenosylhomocysteine nucleosidase, found in Bacillus thuringiensis subsp. konkukian (strain 97-27).